A 106-amino-acid polypeptide reads, in one-letter code: Putative double-stranded DNA mimic protein VV1228 (106 aa).

It belongs to the putative dsDNA mimic protein family.

Functionally, may act as a double-stranded DNA (dsDNA) mimic. Probably regulates the activity of a dsDNA-binding protein. The polypeptide is Putative double-stranded DNA mimic protein VV1228 (Vibrio vulnificus (strain YJ016)).